A 262-amino-acid polypeptide reads, in one-letter code: Dihydroorotate dehydrogenase B (NAD(+)), electron transfer subunit (262 aa).

Residues 3 to 104 (QLQEMMTVVS…MGPLGNGFPV (102 aa)) form the FAD-binding FR-type domain. FAD-binding positions include 53 to 56 (RPIS), 70 to 72 (LYR), and 79 to 80 (GT). Positions 226, 231, 234, and 249 each coordinate [2Fe-2S] cluster.

Belongs to the PyrK family. In terms of assembly, heterotetramer of 2 PyrK and 2 PyrD type B subunits. It depends on [2Fe-2S] cluster as a cofactor. Requires FAD as cofactor.

The protein operates within pyrimidine metabolism; UMP biosynthesis via de novo pathway; orotate from (S)-dihydroorotate (NAD(+) route): step 1/1. In terms of biological role, responsible for channeling the electrons from the oxidation of dihydroorotate from the FMN redox center in the PyrD type B subunit to the ultimate electron acceptor NAD(+). This chain is Dihydroorotate dehydrogenase B (NAD(+)), electron transfer subunit, found in Lactococcus lactis subsp. cremoris (strain SK11).